The sequence spans 1269 residues: Pre-mRNA-splicing factor RSE1 (1269 aa).

The protein belongs to the RSE1 family. Associated with the spliceosome.

Its subcellular location is the nucleus. Involved in pre-mRNA splicing and cell cycle control. The sequence is that of Pre-mRNA-splicing factor RSE1 (RSE1) from Kluyveromyces lactis (strain ATCC 8585 / CBS 2359 / DSM 70799 / NBRC 1267 / NRRL Y-1140 / WM37) (Yeast).